The following is a 229-amino-acid chain: MIITIDGPAGAGKSSIARRVASELGFEFLDTGAMYRAVTWGVMQQGIAWDDVESLVEFADAAQLIWQDDRIYLDNQDISEEIRTPQVTSHIRYLADPPRIRERITAQQRRIATGRDIVTEGRDQGTEVFPDAHCKIFLTASPEERARRRQRQLAENGRVMSVEEILAAQNQRDLEDRMRPVGRLRAASDAIVVQTDGMSPDEVREEVLRLVRECVQASAANSASSDVTR.

Glycine 7 to serine 15 provides a ligand contact to ATP.

It belongs to the cytidylate kinase family. Type 1 subfamily.

The protein resides in the cytoplasm. It catalyses the reaction CMP + ATP = CDP + ADP. The enzyme catalyses dCMP + ATP = dCDP + ADP. In Rhodopirellula baltica (strain DSM 10527 / NCIMB 13988 / SH1), this protein is Cytidylate kinase.